The following is a 378-amino-acid chain: Long-chain-fatty-acid--luciferin-component ligase (378 aa).

This sequence belongs to the LuxE family.

It catalyses the reaction a long-chain fatty acid + L-cysteinyl-[protein] + ATP = an S-(long-chain fatty acyl)-L-cysteinyl-[protein] + AMP + diphosphate. Its pathway is lipid metabolism; fatty acid reduction for biolumincescence. Functionally, acyl-protein synthetase activates tetradecanoic acid. It is a component of the fatty acid reductase complex responsible for converting tetradecanoic acid to the aldehyde which serves as substrate in the luciferase-catalyzed reaction. The polypeptide is Long-chain-fatty-acid--luciferin-component ligase (Aliivibrio fischeri (Vibrio fischeri)).